Here is a 639-residue protein sequence, read N- to C-terminus: Chaperone protein DnaK (639 aa).

At threonine 198 the chain carries Phosphothreonine; by autocatalysis. Over residues 603 to 618 (AKAQTQGGAQEGAAKQ) the composition is skewed to low complexity. The segment at 603–639 (AKAQTQGGAQEGAAKQSNATADDVVDAEFEEVKDDKK) is disordered. A compositionally biased stretch (acidic residues) spans 625–639 (DVVDAEFEEVKDDKK).

This sequence belongs to the heat shock protein 70 family.

Its function is as follows. Acts as a chaperone. The polypeptide is Chaperone protein DnaK (Shewanella oneidensis (strain ATCC 700550 / JCM 31522 / CIP 106686 / LMG 19005 / NCIMB 14063 / MR-1)).